The following is a 314-amino-acid chain: MKPLIIIVGPTAVGKTALGVALAQALQGEIISGDSVQVYRKLDIGSAKPTLAEQGNIPHYLLDALEPAEPFTVAQFQTLANQAIQDIQSRGKVPIVVGGTGLYIRSLIDPFQFAEHGSESIRSFWTAFLSEQGKEALHQELAKRDPLSAQRLHPNDTVRIIRALEMCQLTGKPFSETRGNQDLNYPPLPPSTLYVGLTAPREIIYERINRRCEQMVAAGLIEETHNLIKEGYSPKLKPLQSIGYRHALLYLYGKVTLPEMMRIFQRDTRHFAKRQLTWFRRDPRVVWYDTYSGNLTNILESLIGTCSGMESRVE.

9-16 contributes to the ATP binding site; that stretch reads GPTAVGKT. 11-16 provides a ligand contact to substrate; sequence TAVGKT. The interval 34-37 is interaction with substrate tRNA; that stretch reads DSVQ.

This sequence belongs to the IPP transferase family. In terms of assembly, monomer. It depends on Mg(2+) as a cofactor.

The enzyme catalyses adenosine(37) in tRNA + dimethylallyl diphosphate = N(6)-dimethylallyladenosine(37) in tRNA + diphosphate. In terms of biological role, catalyzes the transfer of a dimethylallyl group onto the adenine at position 37 in tRNAs that read codons beginning with uridine, leading to the formation of N6-(dimethylallyl)adenosine (i(6)A). The polypeptide is tRNA dimethylallyltransferase (Desulfitobacterium hafniense (strain Y51)).